The following is a 396-amino-acid chain: NADH-quinone oxidoreductase subunit D (396 aa).

Belongs to the complex I 49 kDa subunit family. In terms of assembly, NDH-1 is composed of 14 different subunits. Subunits NuoB, C, D, E, F, and G constitute the peripheral sector of the complex.

The protein localises to the cell inner membrane. The catalysed reaction is a quinone + NADH + 5 H(+)(in) = a quinol + NAD(+) + 4 H(+)(out). Its function is as follows. NDH-1 shuttles electrons from NADH, via FMN and iron-sulfur (Fe-S) centers, to quinones in the respiratory chain. The immediate electron acceptor for the enzyme in this species is believed to be ubiquinone. Couples the redox reaction to proton translocation (for every two electrons transferred, four hydrogen ions are translocated across the cytoplasmic membrane), and thus conserves the redox energy in a proton gradient. The sequence is that of NADH-quinone oxidoreductase subunit D from Methylobacterium sp. (strain 4-46).